Consider the following 594-residue polypeptide: UvrABC system protein C (594 aa).

The GIY-YIG domain occupies 13–99 (SSSGVYQYFD…IKQLKPKYNI (87 aa)). Residues 205-240 (DRLIKELELKMERLSSNLRFEEALIYRDRIAKIQKI) enclose the UVR domain.

The protein belongs to the UvrC family. As to quaternary structure, interacts with UvrB in an incision complex.

The protein resides in the cytoplasm. Functionally, the UvrABC repair system catalyzes the recognition and processing of DNA lesions. UvrC both incises the 5' and 3' sides of the lesion. The N-terminal half is responsible for the 3' incision and the C-terminal half is responsible for the 5' incision. The protein is UvrABC system protein C of Helicobacter pylori (strain J99 / ATCC 700824) (Campylobacter pylori J99).